Here is a 462-residue protein sequence, read N- to C-terminus: NEDD8-activating enzyme E1 catalytic subunit (462 aa).

The residue at position 2 (Ala-2) is an N-acetylalanine. The interval 53–70 is interaction with UBE2M N-terminus; sequence HPDFEPSTESLQFLLDTC. Residues 100–124 and 148–171 contribute to the ATP site; these read DMDT…GRPK and IQDF…SIIA. 2 interaction with UBE2M N-terminus regions span residues 157 to 161 and 192 to 217; these read RQFHI and PSSI…LPGM. The interval 227–229 is interaction with NEDD8; the sequence is LYP. The active-site Glycyl thioester intermediate is Cys-237. Interaction with NAE1 regions lie at residues 242-248 and 292-295; these read MPRLPEH and YNIR. Residues 331 to 338 are interaction with UBE2M N-terminus; sequence IATSAYIP. An interaction with NEDD8 region spans residues 352-357; it reads YTYTFE. The tract at residues 368–462 is interaction with UBE2M core domain; that stretch reads SQLPQNIQFS…QTVLFKLHFT (95 aa).

Belongs to the ubiquitin-activating E1 family. UBA3 subfamily. Heterodimer of UBA3 and NAE1. Interacts with NEDD8, UBE2F and UBE2M. Binds ESR1 and ESR2 with bound steroid ligand. Interacts with TBATA. Ubiquitously expressed.

It catalyses the reaction ATP + [NEDD8 protein] + [E1 NEDD8-activating enzyme]-L-cysteine = AMP + diphosphate + [E1 NEDD8-activating enzyme]-S-[NEDD8 protein]-yl-L-cysteine.. The protein operates within protein modification; protein neddylation. With respect to regulation, binding of TP53BP2 to the regulatory subunit NAE1 decreases activity. Its function is as follows. Catalytic subunit of the dimeric UBA3-NAE1 E1 enzyme. E1 activates NEDD8 by first adenylating its C-terminal glycine residue with ATP, thereafter linking this residue to the side chain of the catalytic cysteine, yielding a NEDD8-UBA3 thioester and free AMP. E1 finally transfers NEDD8 to the catalytic cysteine of UBE2M. Down-regulates steroid receptor activity. Necessary for cell cycle progression. In Rattus norvegicus (Rat), this protein is NEDD8-activating enzyme E1 catalytic subunit (Uba3).